Consider the following 505-residue polypeptide: Maturase K (505 aa).

The protein belongs to the intron maturase 2 family. MatK subfamily.

The protein localises to the plastid. It is found in the chloroplast. Functionally, usually encoded in the trnK tRNA gene intron. Probably assists in splicing its own and other chloroplast group II introns. This Rhizophora stylosa (Bakau) protein is Maturase K.